Here is a 477-residue protein sequence, read N- to C-terminus: Ribulose bisphosphate carboxylase large chain (477 aa).

Positions 1 to 2 (MS) are excised as a propeptide. Pro3 is subject to N-acetylproline. An N6,N6,N6-trimethyllysine modification is found at Lys14. 2 residues coordinate substrate: Asn123 and Thr173. The active-site Proton acceptor is the Lys175. A substrate-binding site is contributed by Lys177. Positions 201, 203, and 204 each coordinate Mg(2+). At Lys201 the chain carries N6-carboxylysine. His294 acts as the Proton acceptor in catalysis. Residues Arg295, His327, and Ser379 each contribute to the substrate site.

The protein belongs to the RuBisCO large chain family. Type I subfamily. As to quaternary structure, heterohexadecamer of 8 large chains and 8 small chains; disulfide-linked. The disulfide link is formed within the large subunit homodimers. The cofactor is Mg(2+). In terms of processing, the disulfide bond which can form in the large chain dimeric partners within the hexadecamer appears to be associated with oxidative stress and protein turnover.

The protein localises to the plastid. The protein resides in the chloroplast. It carries out the reaction 2 (2R)-3-phosphoglycerate + 2 H(+) = D-ribulose 1,5-bisphosphate + CO2 + H2O. The catalysed reaction is D-ribulose 1,5-bisphosphate + O2 = 2-phosphoglycolate + (2R)-3-phosphoglycerate + 2 H(+). In terms of biological role, ruBisCO catalyzes two reactions: the carboxylation of D-ribulose 1,5-bisphosphate, the primary event in carbon dioxide fixation, as well as the oxidative fragmentation of the pentose substrate in the photorespiration process. Both reactions occur simultaneously and in competition at the same active site. This Cichorium intybus (Chicory) protein is Ribulose bisphosphate carboxylase large chain.